The chain runs to 80 residues: Raniseptin-1 (80 aa).

The N-terminal stretch at 1-22 (MAFLKKSLFLVLFLGIVSLSIC) is a signal peptide. Positions 23-49 (EEEKREGEEEEKQEEENEELSEEELRE) are excised as a propeptide.

Belongs to the frog skin active peptide (FSAP) family. Dermaseptin subfamily. Expressed by the skin glands.

The protein localises to the secreted. Has antibacterial activity against the Gram-negative bacteria E.coli ATCC 25922 (MIC=5 uM), P.aeruginosa ATCC 27853 (MIC=10 uM) and X.citri (MIC&lt; 2 uM), and the Gram-positive bacterium S.aureus ATCC 29313 (MIC=20 uM). Does not have hemolytic activity against human erythrocytes. This Boana raniceps (Chaco tree frog) protein is Raniseptin-1.